The primary structure comprises 275 residues: Esterase AAEL000016 (275 aa).

The disordered stretch occupies residues 1–21; sequence MMANETAAKSTKSSPTPAVEP. Positions 7–16 are enriched in polar residues; that stretch reads AAKSTKSSPT. Residues Ser129, Asp187, and His214 each act as charge relay system in the active site. Residues 253 to 275 form a disordered region; the sequence is LVDDSGPAGNGVHDDDDDDDDSD. Acidic residues predominate over residues 266 to 275; it reads DDDDDDDDSD.

It belongs to the LovG family.

This Aedes aegypti (Yellowfever mosquito) protein is Esterase AAEL000016.